A 420-amino-acid chain; its full sequence is 3-isopropylmalate dehydratase large subunit (420 aa).

Residues C300, C361, and C364 each coordinate [4Fe-4S] cluster.

It belongs to the aconitase/IPM isomerase family. LeuC type 2 subfamily. Heterodimer of LeuC and LeuD. Requires [4Fe-4S] cluster as cofactor.

It catalyses the reaction (2R,3S)-3-isopropylmalate = (2S)-2-isopropylmalate. It functions in the pathway amino-acid biosynthesis; L-leucine biosynthesis; L-leucine from 3-methyl-2-oxobutanoate: step 2/4. In terms of biological role, catalyzes the isomerization between 2-isopropylmalate and 3-isopropylmalate, via the formation of 2-isopropylmaleate. The polypeptide is 3-isopropylmalate dehydratase large subunit (Endomicrobium trichonymphae).